The following is a 137-amino-acid chain: Large ribosomal subunit protein uL16 (137 aa).

The protein belongs to the universal ribosomal protein uL16 family. Part of the 50S ribosomal subunit.

Binds 23S rRNA and is also seen to make contacts with the A and possibly P site tRNAs. The polypeptide is Large ribosomal subunit protein uL16 (Nitrobacter winogradskyi (strain ATCC 25391 / DSM 10237 / CIP 104748 / NCIMB 11846 / Nb-255)).